We begin with the raw amino-acid sequence, 266 residues long: MWYSIRNNQRMALIKQGYKILAEYRLVQDHLKNIYAIPSYASGLHWFGVIFVHSGIYAGSMFRFSILLPENFPDDTILPTVIFNAAIFHPHICPHSKSLDLGPCFKEWRKDQHHIWHLLRYIQAVFADPEGSICTGKSPSGDLVVLDEVNNLEALNMLAKSRPEYIKRIQELAISSRRHMYDKPMIEDPHYIIVEPYCAERHLRFMEQLKSPSWREATCEDDSPPAELLGHIDSSRQLDEDEANQRGKLQAATTDLQHGARCSVAQ.

Residues 15 to 178 (KQGYKILAEY…IQELAISSRR (164 aa)) enclose the UBC core domain. The interval 216-266 (EATCEDDSPPAELLGHIDSSRQLDEDEANQRGKLQAATTDLQHGARCSVAQ) is disordered.

Belongs to the ubiquitin-conjugating enzyme family. FTS subfamily.

The protein is Protein crossbronx-like of Drosophila ananassae (Fruit fly).